Here is a 255-residue protein sequence, read N- to C-terminus: NAD kinase (255 aa).

Catalysis depends on D44, which acts as the Proton acceptor. NAD(+)-binding positions include 44 to 45 (DG), H49, 114 to 115 (NE), D144, A152, 155 to 160 (SAYNLS), and Q216.

It belongs to the NAD kinase family. The cofactor is a divalent metal cation.

The protein localises to the cytoplasm. The enzyme catalyses NAD(+) + ATP = ADP + NADP(+) + H(+). Involved in the regulation of the intracellular balance of NAD and NADP, and is a key enzyme in the biosynthesis of NADP. Catalyzes specifically the phosphorylation on 2'-hydroxyl of the adenosine moiety of NAD to yield NADP. The protein is NAD kinase of Rickettsia peacockii (strain Rustic).